The sequence spans 105 residues: Large ribosomal subunit protein uL24 (105 aa).

This sequence belongs to the universal ribosomal protein uL24 family. In terms of assembly, part of the 50S ribosomal subunit.

In terms of biological role, one of two assembly initiator proteins, it binds directly to the 5'-end of the 23S rRNA, where it nucleates assembly of the 50S subunit. One of the proteins that surrounds the polypeptide exit tunnel on the outside of the subunit. This Francisella tularensis subsp. tularensis (strain FSC 198) protein is Large ribosomal subunit protein uL24.